The chain runs to 309 residues: Manganese ABC transporter substrate-binding lipoprotein PsaA (309 aa).

An N-terminal signal peptide occupies residues Met1–Ala19. Cys20 is lipidated: N-palmitoyl cysteine. The S-diacylglycerol cysteine moiety is linked to residue Cys20. 4 residues coordinate Mn(2+): His67, His139, Glu205, and Asp280.

It belongs to the bacterial solute-binding protein 9 family. Lipoprotein receptor antigen (Lrai) subfamily.

The protein localises to the cell membrane. Its function is as follows. Part of the ATP-riven (ABC) transport system PsaABC involved in manganese import. Binds manganese with high affinity and specificity and delivers it to the membrane permease for translocation into the cytoplasm. Also acts as an adhesin which is involved on adherence to extracellular matrix. This Streptococcus mitis protein is Manganese ABC transporter substrate-binding lipoprotein PsaA (psaA).